A 227-amino-acid chain; its full sequence is Large ribosomal subunit protein uL1 (227 aa).

This sequence belongs to the universal ribosomal protein uL1 family. Part of the 50S ribosomal subunit.

Functionally, binds directly to 23S rRNA. The L1 stalk is quite mobile in the ribosome, and is involved in E site tRNA release. In terms of biological role, protein L1 is also a translational repressor protein, it controls the translation of the L11 operon by binding to its mRNA. This chain is Large ribosomal subunit protein uL1, found in Mesoplasma florum (strain ATCC 33453 / NBRC 100688 / NCTC 11704 / L1) (Acholeplasma florum).